The following is a 354-amino-acid chain: 3-dehydroquinate synthase (354 aa).

Residues 66-71 (SGETSK), 100-104 (GATGD), 124-125 (TT), Lys-136, Lys-145, and 163-166 (FLET) contribute to the NAD(+) site. Zn(2+)-binding residues include Glu-178, His-242, and His-256.

The protein belongs to the sugar phosphate cyclases superfamily. Dehydroquinate synthase family. NAD(+) serves as cofactor. Requires Co(2+) as cofactor. It depends on Zn(2+) as a cofactor.

The protein localises to the cytoplasm. It carries out the reaction 7-phospho-2-dehydro-3-deoxy-D-arabino-heptonate = 3-dehydroquinate + phosphate. Its pathway is metabolic intermediate biosynthesis; chorismate biosynthesis; chorismate from D-erythrose 4-phosphate and phosphoenolpyruvate: step 2/7. Functionally, catalyzes the conversion of 3-deoxy-D-arabino-heptulosonate 7-phosphate (DAHP) to dehydroquinate (DHQ). The protein is 3-dehydroquinate synthase of Staphylococcus epidermidis (strain ATCC 35984 / DSM 28319 / BCRC 17069 / CCUG 31568 / BM 3577 / RP62A).